Reading from the N-terminus, the 371-residue chain is Alanine racemase (371 aa).

Lysine 40 serves as the catalytic Proton acceptor; specific for D-alanine. Residue lysine 40 is modified to N6-(pyridoxal phosphate)lysine. Arginine 136 provides a ligand contact to substrate. Tyrosine 263 serves as the catalytic Proton acceptor; specific for L-alanine. Position 310 (methionine 310) interacts with substrate.

Belongs to the alanine racemase family. Requires pyridoxal 5'-phosphate as cofactor.

It catalyses the reaction L-alanine = D-alanine. It functions in the pathway amino-acid biosynthesis; D-alanine biosynthesis; D-alanine from L-alanine: step 1/1. Functionally, catalyzes the interconversion of L-alanine and D-alanine. May also act on other amino acids. This Streptococcus mutans serotype c (strain ATCC 700610 / UA159) protein is Alanine racemase (alr).